The chain runs to 280 residues: 4-diphosphocytidyl-2-C-methyl-D-erythritol kinase (280 aa).

K8 is a catalytic residue. 91–101 (PVSAGLAGGST) lines the ATP pocket. D133 is a catalytic residue.

It belongs to the GHMP kinase family. IspE subfamily.

The catalysed reaction is 4-CDP-2-C-methyl-D-erythritol + ATP = 4-CDP-2-C-methyl-D-erythritol 2-phosphate + ADP + H(+). It participates in isoprenoid biosynthesis; isopentenyl diphosphate biosynthesis via DXP pathway; isopentenyl diphosphate from 1-deoxy-D-xylulose 5-phosphate: step 3/6. Its function is as follows. Catalyzes the phosphorylation of the position 2 hydroxy group of 4-diphosphocytidyl-2C-methyl-D-erythritol. This Clostridium botulinum (strain Eklund 17B / Type B) protein is 4-diphosphocytidyl-2-C-methyl-D-erythritol kinase.